A 398-amino-acid polypeptide reads, in one-letter code: 8-amino-7-oxononanoate synthase (398 aa).

Substrate is bound at residue Arg23. 110–111 serves as a coordination point for pyridoxal 5'-phosphate; sequence GY. Residue His135 coordinates substrate. Residues Ser181, His209, and Thr238 each coordinate pyridoxal 5'-phosphate. Position 241 is an N6-(pyridoxal phosphate)lysine (Lys241). A substrate-binding site is contributed by Thr355.

It belongs to the class-II pyridoxal-phosphate-dependent aminotransferase family. BioF subfamily. Homodimer. Pyridoxal 5'-phosphate is required as a cofactor.

It carries out the reaction 6-carboxyhexanoyl-[ACP] + L-alanine + H(+) = (8S)-8-amino-7-oxononanoate + holo-[ACP] + CO2. It participates in cofactor biosynthesis; biotin biosynthesis. Its function is as follows. Catalyzes the decarboxylative condensation of pimeloyl-[acyl-carrier protein] and L-alanine to produce 8-amino-7-oxononanoate (AON), [acyl-carrier protein], and carbon dioxide. This is 8-amino-7-oxononanoate synthase from Cellvibrio japonicus (strain Ueda107) (Pseudomonas fluorescens subsp. cellulosa).